The following is a 63-amino-acid chain: U7-theraphotoxin-Cg1a (63 aa).

Positions Met-1 to Ala-21 are cleaved as a signal peptide. Positions Ile-22 to Arg-31 are excised as a propeptide. Intrachain disulfides connect Cys-33–Cys-47, Cys-40–Cys-52, and Cys-46–Cys-59.

As to expression, expressed by the venom gland.

It localises to the secreted. Inhibits preferentially tetrodotoxin-insensitive sodium currents (Nav) on rat cardiac myocytes (IC(50) is 0.26 uM) and has weaker inhibition activity toward tetrodotoxin-sensitive sodium currents on rat dorsal root ganglion (DRG) sensory neurons (IC(50) is 0.83 uM) and on cockroach dorsal unpaired median (DUM) neurons (IC(50) is 1.19 uM). Has no significant effect on potassium currents on DRG neurons. In Chilobrachys guangxiensis (Chinese earth tiger tarantula), this protein is U7-theraphotoxin-Cg1a.